We begin with the raw amino-acid sequence, 331 residues long: Probable cyclic nucleotide synthase IK1_05630 (331 aa).

The protein belongs to the CD-NTase family. D12 subfamily.

In terms of biological role, cyclic nucleotide synthase (second messenger synthase) of a CBASS antivirus system. CBASS (cyclic oligonucleotide-based antiphage signaling system) provides immunity against bacteriophage. The CD-NTase protein synthesizes cyclic nucleotides in response to infection; these serve as specific second messenger signals. The signals activate a diverse range of effectors, leading to bacterial cell death and thus abortive phage infection. A type I-B CBASS system. Its function is as follows. Probably a cyclic nucleotide synthase that makes second messenger nucleotide which activates a CBASS antiviral defense system. Protects B.subtilis against phage infection. When IK1_05630 and IK1_05631 are introduced in B.subtilis BEST7003 there is 1000-fold protection against phage SBSphiC. Both genes are required for protection. Activation leads to bacterial cell lysis and death, which occurs before the phage has finished its replication cycle, thus protecting non-infected bacteria by aborting the phage infection and preventing its propagation. The chain is Probable cyclic nucleotide synthase IK1_05630 from Bacillus cereus (strain VD146).